The chain runs to 3948 residues: Equisetin synthetase eqxS (3948 aa).

The Ketosynthase family 3 (KS3) domain maps to S4 to A438. Catalysis depends on for beta-ketoacyl synthase activity residues C177, H316, and H358. Residues I543–R847 are malonyl-CoA:ACP transacylase (MAT) domain. Positions H931 to P1066 are N-terminal hotdog fold. The tract at residues H931 to T1233 is dehydratase (DH) domain. Residues H931–A1235 enclose the PKS/mFAS DH domain. Residue H964 is the Proton acceptor; for dehydratase activity of the active site. A C-terminal hotdog fold region spans residues L1081–A1235. D1141 functions as the Proton donor; for dehydratase activity in the catalytic mechanism. Positions M1376 to H1574 are methyltransferase (MT) domain. Residues T2105–S2277 are ketoreductase (KR) domain. A Carrier 1 domain is found at A2389 to L2464. An O-(pantetheine 4'-phosphoryl)serine modification is found at S2424. Residues Q2480–R2553 are disordered. Polar residues-rich tracts occupy residues V2487–S2505 and G2513–W2528. Residues D2529–D2541 show a composition bias toward basic and acidic residues. The tract at residues S2564–A2991 is condensation (C) domain. An adenylation (A) (KR) domain region spans residues Q3026–L3424. Positions E3540–G3617 constitute a Carrier 2 domain. An O-(pantetheine 4'-phosphoryl)serine modification is found at S3577. The interval L3653 to I3870 is reductase (RED) domain.

This sequence in the C-terminal section; belongs to the NRP synthetase family.

The enzyme catalyses L-serine + 7 malonyl-CoA + acetyl-CoA + 2 S-adenosyl-L-methionine + ATP + 8 NADPH + 11 H(+) = (5S)-3-[(2E,6R,8E,10E,12E)-2,6-dimethyltetradeca-2,8,10,12-tetraenoyl]-5-(hydroxymethyl)pyrrolidine-2,4-dione + AMP + 2 S-adenosyl-L-homocysteine + 7 CO2 + diphosphate + 8 NADP(+) + 8 CoA + 6 H2O. Its pathway is mycotoxin biosynthesis. Its function is as follows. Hybrid PKS-NRPS synthetase; part of the gene cluster that mediates the biosynthesis of equisetin, a trans-fused decalin-containing tetramic acid with antimicrobial activity. The PKS module of eqxS together with the enoylreductase eqxC catalyze the formation of the polyketide unit which is then conjugated to L-serine by the condensation domain of the eqxS NRPS module. Activity of the Dieckmann cyclase domain (RED) results in release of the Dieckmann product intermediate. Diels-Alderase eqx3 is involved in endo-selective Diels-Alder cycloaddition to form the decalin ring, leading to the production of N-desmethylequisetin also called trichosetin. Subsequent N-methylation is carried out by eqxD to give equisetin. The protein is Equisetin synthetase eqxS of Fusarium heterosporum.